Reading from the N-terminus, the 548-residue chain is Glycosyl hydrolase family 109 protein 3 (548 aa).

The first 21 residues, 1–21 (MKLKKLLLSVLMLLSISGLQA), serve as a signal peptide directing secretion. NAD(+) contacts are provided by residues 71 to 72 (MR), Asp93, 141 to 144 (WNHH), 161 to 162 (EV), and Asn190. Residue Tyr219 participates in substrate binding. 240–244 (DNLHW) serves as a coordination point for NAD(+). Residues Arg245, 257–260 (YATH), and Tyr335 contribute to the substrate site. Tyr257 lines the NAD(+) pocket.

Belongs to the Gfo/Idh/MocA family. Glycosyl hydrolase 109 subfamily. NAD(+) serves as cofactor.

Its function is as follows. Glycosidase. The protein is Glycosyl hydrolase family 109 protein 3 of Phocaeicola vulgatus (strain ATCC 8482 / DSM 1447 / JCM 5826 / CCUG 4940 / NBRC 14291 / NCTC 11154) (Bacteroides vulgatus).